Consider the following 93-residue polypeptide: Small ribosomal subunit protein uS17 (93 aa).

It belongs to the universal ribosomal protein uS17 family. Part of the 30S ribosomal subunit.

One of the primary rRNA binding proteins, it binds specifically to the 5'-end of 16S ribosomal RNA. This Corynebacterium kroppenstedtii (strain DSM 44385 / JCM 11950 / CIP 105744 / CCUG 35717) protein is Small ribosomal subunit protein uS17.